We begin with the raw amino-acid sequence, 844 residues long: Putative ubiquitin thioesterase 232R (844 aa).

4 disordered regions span residues 136-223, 261-287, 326-377, and 422-541; these read NSST…DEAE, SRRK…PPME, LLNG…PELT, and QKKQ…KLSV. Over residues 137-216 the composition is skewed to low complexity; the sequence is SSTRSRSPSV…PSRQSVRQSS (80 aa). Composition is skewed to low complexity over residues 332–341 and 354–364; these read RPSPSLPQSR and RSPSVGSPSVR. Positions 429 to 438 are enriched in pro residues; sequence SPSPTPPSPV. The segment covering 472–485 has biased composition (basic and acidic residues); it reads VQKKMGKSGEREPK. Residues 504-518 are compositionally biased toward low complexity; it reads SLRSRLSTQQQTQQS. The segment covering 526-535 has biased composition (basic and acidic residues); the sequence is ESIKPEESVR. The OTU domain occupies 590 to 725; it reads YTVKQVSGDG…NYHYTSLVPI (136 aa). Residue aspartate 598 is part of the active site. Cysteine 601 serves as the catalytic Nucleophile. Histidine 718 is an active-site residue.

It catalyses the reaction Thiol-dependent hydrolysis of ester, thioester, amide, peptide and isopeptide bonds formed by the C-terminal Gly of ubiquitin (a 76-residue protein attached to proteins as an intracellular targeting signal).. In terms of biological role, hydrolase that can remove conjugated ubiquitin from proteins and may therefore play an important regulatory role at the level of protein turnover by preventing degradation. The chain is Putative ubiquitin thioesterase 232R from Aedes vexans (Inland floodwater mosquito).